A 1302-amino-acid chain; its full sequence is Multidrug resistance protein 1 (1302 aa).

The helical transmembrane segment at 43-63 threads the bilayer; it reads GVFEIILLIIGIIGSIGVGCL. Positions 51 to 360 constitute an ABC transmembrane type-1 1 domain; sequence IIGIIGSIGV…ISTPINILNS (310 aa). A glycan (N-linked (GlcNAc...) asparagine) is linked at N83. The next 5 membrane-spanning stretches (helical) occupy residues 118-138, 192-212, 213-233, 292-312, and 331-351; these read LYFAIGNMVAGFLQTICFFVL, LFQTFSSFITGYLIGFIKCWD, LTLVVLCMFPFIMVSMMGLGM, IGIGTGLGCMMFFIMSSNALG, and AGTVLTVFMSVLLATQSLSQI. The region spanning 395–634 is the ABC transporter 1 domain; it reads IRFEDVQFVY…KGTYYGLVKR (240 aa). Residue 430–437 participates in ATP binding; that stretch reads GASGCGKS. The N-linked (GlcNAc...) asparagine glycan is linked to N663. A helical transmembrane segment spans residues 712–732; it reads YIFCTLGLIGGIGAGAAFPFY. Positions 713 to 1022 constitute an ABC transmembrane type-1 2 domain; it reads IFCTLGLIGG…IGNVLPDVGK (310 aa). N-linked (GlcNAc...) asparagine glycosylation is present at N751. The helical transmembrane segment at 765–785 threads the bilayer; the sequence is MIIICIGIITMISFFCYVGLF. N-linked (GlcNAc...) asparagine glycosylation is present at N808. Transmembrane regions (helical) follow at residues 841-861 and 862-882; these read VGDIIEIMSTVGFGFGIGLYF and SWKLSLCILAVFPIISFFMFI. Residues 1057–1296 form the ABC transporter 2 domain; it reads IEFKNIHFRY…KGFYYTLAMQ (240 aa). An ATP-binding site is contributed by 1092–1099; that stretch reads GASGCGKS.

The protein belongs to the ABC transporter superfamily. ABCB family. Multidrug resistance exporter (TC 3.A.1.201) subfamily.

It localises to the membrane. It carries out the reaction ATP + H2O + xenobioticSide 1 = ADP + phosphate + xenobioticSide 2.. In terms of biological role, energy-dependent efflux pump responsible for decreased drug accumulation in multidrug resistance parasites. The polypeptide is Multidrug resistance protein 1 (Entamoeba histolytica (strain ATCC 30459 / HM-1:IMSS / ABRM)).